A 189-amino-acid chain; its full sequence is Riboflavin kinase (189 aa).

Residues T42 and N44 each contribute to the Mg(2+) site. Catalysis depends on E124, which acts as the Nucleophile.

This sequence belongs to the flavokinase family. Requires Zn(2+) as cofactor. The cofactor is Mg(2+).

The enzyme catalyses riboflavin + ATP = FMN + ADP + H(+). It participates in cofactor biosynthesis; FMN biosynthesis; FMN from riboflavin (ATP route): step 1/1. Functionally, catalyzes the phosphorylation of riboflavin (vitamin B2) to form flavin mononucleotide (FMN) coenzyme. The polypeptide is Riboflavin kinase (FMN1) (Candida glabrata (strain ATCC 2001 / BCRC 20586 / JCM 3761 / NBRC 0622 / NRRL Y-65 / CBS 138) (Yeast)).